The sequence spans 337 residues: Glucokinase (337 aa).

11–16 (ADIGGT) is a binding site for ATP.

This sequence belongs to the bacterial glucokinase family.

It is found in the cytoplasm. It catalyses the reaction D-glucose + ATP = D-glucose 6-phosphate + ADP + H(+). In Xylella fastidiosa (strain M23), this protein is Glucokinase.